A 266-amino-acid chain; its full sequence is Uracil-DNA glycosylase (266 aa).

The disordered stretch occupies residues 1 to 25 (MTRRADPAQATLFDDDEPAGAPTAT). Catalysis depends on Asp97, which acts as the Proton acceptor.

This sequence belongs to the uracil-DNA glycosylase (UDG) superfamily. UNG family.

It localises to the cytoplasm. It carries out the reaction Hydrolyzes single-stranded DNA or mismatched double-stranded DNA and polynucleotides, releasing free uracil.. Its function is as follows. Excises uracil residues from the DNA which can arise as a result of misincorporation of dUMP residues by DNA polymerase or due to deamination of cytosine. The polypeptide is Uracil-DNA glycosylase (Ralstonia nicotianae (strain ATCC BAA-1114 / GMI1000) (Ralstonia solanacearum)).